Reading from the N-terminus, the 121-residue chain is uncharacterized protein (121 aa).

Residues 65–84 (TILFYTPTLICFLFLQNFLY) form a helical membrane-spanning segment.

It localises to the membrane. This is an uncharacterized protein from Saccharomyces cerevisiae (strain ATCC 204508 / S288c) (Baker's yeast).